A 208-amino-acid polypeptide reads, in one-letter code: NAD(P)H-quinone oxidoreductase subunit I (208 aa).

4Fe-4S ferredoxin-type domains lie at 55–84 and 95–124; these read GRIH…VDWV and RNYS…MTEE. The [4Fe-4S] cluster site is built by C64, C67, C70, C74, C104, C107, C110, and C114.

It belongs to the complex I 23 kDa subunit family. As to quaternary structure, NDH-1 is composed of at least 11 different subunits. [4Fe-4S] cluster is required as a cofactor.

It is found in the cellular thylakoid membrane. It carries out the reaction a plastoquinone + NADH + (n+1) H(+)(in) = a plastoquinol + NAD(+) + n H(+)(out). The enzyme catalyses a plastoquinone + NADPH + (n+1) H(+)(in) = a plastoquinol + NADP(+) + n H(+)(out). Its function is as follows. NDH-1 shuttles electrons from an unknown electron donor, via FMN and iron-sulfur (Fe-S) centers, to quinones in the respiratory and/or the photosynthetic chain. The immediate electron acceptor for the enzyme in this species is believed to be plastoquinone. Couples the redox reaction to proton translocation, and thus conserves the redox energy in a proton gradient. The polypeptide is NAD(P)H-quinone oxidoreductase subunit I (Prochlorococcus marinus (strain AS9601)).